We begin with the raw amino-acid sequence, 903 residues long: Probable dipeptidyl-aminopeptidase B (903 aa).

The interval 1 to 83 (MGKFEDDGNS…PLISSGTKTG (83 aa)) is disordered. Residues 1–90 (MGKFEDDGNS…KTGSSSRLRK (90 aa)) are Cytoplasmic-facing. Residues 10-37 (SESVPLTRQRSESLASQTSTDSGLSIAS) are compositionally biased toward polar residues. A helical; Signal-anchor for type II membrane protein transmembrane segment spans residues 91 to 111 (IVWLLVLLCVGGWVLSFVLFL). Topologically, residues 112–903 (TQKRPDTAAL…TANPKPQEST (792 aa)) are vacuolar. Residues 121–143 (LSSASTVEIHEPGPATGGTSHGK) form a disordered region. 3 N-linked (GlcNAc...) asparagine glycosylation sites follow: N268, N349, and N640. S754 (charge relay system) is an active-site residue. A glycan (N-linked (GlcNAc...) asparagine) is linked at N808. Active-site charge relay system residues include D831 and H864.

This sequence belongs to the peptidase S9B family.

It is found in the vacuole membrane. It carries out the reaction Release of an N-terminal dipeptide, Xaa-Yaa-|-Zaa-, from a polypeptide, preferentially when Yaa is Pro, provided Zaa is neither Pro nor hydroxyproline.. Functionally, type IV dipeptidyl-peptidase which removes N-terminal dipeptides sequentially from polypeptides having unsubstituted N-termini provided that the penultimate residue is proline. The polypeptide is Probable dipeptidyl-aminopeptidase B (dapB) (Penicillium rubens (strain ATCC 28089 / DSM 1075 / NRRL 1951 / Wisconsin 54-1255) (Penicillium chrysogenum)).